A 157-amino-acid polypeptide reads, in one-letter code: MAEVESFTLDHTKVKAPYVRLIEEQKGPKGGTIANYDLRLAQPNQTSIETGGLHTLEHLFASLMRDRLDGIIDISPFGCRTGFHMISWYTYDTETVAKALKETLTEIRDSIEFSDIPGVSEKTCGNFKDHSLWSAKNWAKVILDEGISSDPFERKVV.

Fe cation-binding residues include H54, H58, and C124.

Belongs to the LuxS family. As to quaternary structure, homodimer. The cofactor is Fe cation.

The enzyme catalyses S-(5-deoxy-D-ribos-5-yl)-L-homocysteine = (S)-4,5-dihydroxypentane-2,3-dione + L-homocysteine. Functionally, involved in the synthesis of autoinducer 2 (AI-2) which is secreted by bacteria and is used to communicate both the cell density and the metabolic potential of the environment. The regulation of gene expression in response to changes in cell density is called quorum sensing. Catalyzes the transformation of S-ribosylhomocysteine (RHC) to homocysteine (HC) and 4,5-dihydroxy-2,3-pentadione (DPD). The chain is S-ribosylhomocysteine lyase from Oenococcus oeni (strain ATCC BAA-331 / PSU-1).